Reading from the N-terminus, the 488-residue chain is 6-phosphogluconate dehydrogenase, decarboxylating (488 aa).

Residues 9–14 (GLAVMG), 32–34 (NRT), 74–76 (VKA), and Asn-102 contribute to the NADP(+) site. Substrate is bound by residues Asn-102 and 128–130 (SGG). Catalysis depends on Lys-183, which acts as the Proton acceptor. Position 186 to 187 (186 to 187 (HN)) interacts with substrate. Catalysis depends on Glu-190, which acts as the Proton donor. Substrate is bound by residues Tyr-191, Lys-260, Arg-287, Arg-451, and His-457.

It belongs to the 6-phosphogluconate dehydrogenase family. As to quaternary structure, homodimer.

The catalysed reaction is 6-phospho-D-gluconate + NADP(+) = D-ribulose 5-phosphate + CO2 + NADPH. It participates in carbohydrate degradation; pentose phosphate pathway; D-ribulose 5-phosphate from D-glucose 6-phosphate (oxidative stage): step 3/3. Functionally, catalyzes the oxidative decarboxylation of 6-phosphogluconate to ribulose 5-phosphate and CO(2), with concomitant reduction of NADP to NADPH. In Treponema pallidum (strain Nichols), this protein is 6-phosphogluconate dehydrogenase, decarboxylating (gnd).